The following is a 283-amino-acid chain: Orotidine 5'-phosphate decarboxylase (283 aa).

The active-site Proton donor is the lysine 97.

The protein belongs to the OMP decarboxylase family. Type 2 subfamily.

It catalyses the reaction orotidine 5'-phosphate + H(+) = UMP + CO2. It participates in pyrimidine metabolism; UMP biosynthesis via de novo pathway; UMP from orotate: step 2/2. This chain is Orotidine 5'-phosphate decarboxylase, found in Clostridium botulinum (strain Okra / Type B1).